A 186-amino-acid chain; its full sequence is Ribosome-recycling factor (186 aa).

This sequence belongs to the RRF family.

The protein localises to the cytoplasm. Responsible for the release of ribosomes from messenger RNA at the termination of protein biosynthesis. May increase the efficiency of translation by recycling ribosomes from one round of translation to another. The protein is Ribosome-recycling factor of Porphyromonas gingivalis (strain ATCC BAA-308 / W83).